Reading from the N-terminus, the 78-residue chain is Mandibular organ-inhibiting hormone 2 (78 aa).

Cystine bridges form between cysteine 7–cysteine 44, cysteine 24–cysteine 40, and cysteine 27–cysteine 53.

This sequence belongs to the arthropod CHH/MIH/GIH/VIH hormone family. In terms of tissue distribution, produced by the medulla terminalis X-organ in the eyestalks and transported to the sinus gland where it is stored and released.

It is found in the secreted. Functionally, represses the synthesis of methyl farnesoate, the precursor of insect juvenile hormone III in the mandibular organ. In Cancer pagurus (Rock crab), this protein is Mandibular organ-inhibiting hormone 2.